Here is a 262-residue protein sequence, read N- to C-terminus: MIHETAKIHPSAVIEGNVTIEANVSVGPFTYISGNVTIGEGTEVMSHVVIKGDTTIGKDNRIFAFAIIGEESQDKKYGGEATTVVIGDRNVIRESVQIHRGTVQDRGVTTVGSDNLLCVNVHIAHDCVVGDNIIMGNNATLAGHVTVEDFAIVSALSPVHQFCTVGAHSFIGGASVVVQDVPPFVMAQGNHCKPFGINIEGLKRRGFEKAEIHAIRRAYKALYRNGNTLEEAKVEINKEIEAFPVLQGFLDLFEKSTRGIIR.

It belongs to the transferase hexapeptide repeat family. LpxA subfamily. Homotrimer.

It localises to the cytoplasm. It catalyses the reaction a (3R)-hydroxyacyl-[ACP] + UDP-N-acetyl-alpha-D-glucosamine = a UDP-3-O-[(3R)-3-hydroxyacyl]-N-acetyl-alpha-D-glucosamine + holo-[ACP]. It participates in glycolipid biosynthesis; lipid IV(A) biosynthesis; lipid IV(A) from (3R)-3-hydroxytetradecanoyl-[acyl-carrier-protein] and UDP-N-acetyl-alpha-D-glucosamine: step 1/6. In terms of biological role, involved in the biosynthesis of lipid A, a phosphorylated glycolipid that anchors the lipopolysaccharide to the outer membrane of the cell. This chain is Acyl-[acyl-carrier-protein]--UDP-N-acetylglucosamine O-acyltransferase, found in Aliivibrio fischeri (strain ATCC 700601 / ES114) (Vibrio fischeri).